A 75-amino-acid chain; its full sequence is Gas vesicle protein S (75 aa).

The protein belongs to the gas vesicle GvpA family.

Its subcellular location is the gas vesicle. Functionally, probably a minor component of the gas vesicle. Gas vesicles are hollow, gas filled proteinaceous nanostructures found in some microorganisms. It is not clear what function gas vesicles perform in soil bacteria. The protein is Gas vesicle protein S of Streptomyces sp. (strain CB03234).